A 338-amino-acid chain; its full sequence is Envelope glycoprotein K (338 aa).

The first 30 residues, 1-30, serve as a signal peptide directing secretion; that stretch reads MLAVRSLQHLSTVVLITAYGLVLVWYTVFG. Residues 31–121 lie on the Extracellular side of the membrane; sequence ASPLHRCIYA…VNCLETLWYT (91 aa). The tract at residues 31-121 is involved in fusion; sequence ASPLHRCIYA…VNCLETLWYT (91 aa). N-linked (GlcNAc...) asparagine; by host glycans are attached at residues asparagine 48 and asparagine 58. The chain crosses the membrane as a helical span at residues 122–140; that stretch reads RVRLVVVGWFLYLAFVALH. Topologically, residues 141–212 are cytoplasmic; it reads QRRCMFGVVS…DPVTFLYHRP (72 aa). Residues 213–233 form a helical membrane-spanning segment; the sequence is AIGVIVGCELIVRFVAVGLIV. Over 234-243 the chain is Extracellular; the sequence is GTAFISRGAC. Residues 244–264 form a helical membrane-spanning segment; the sequence is AITYPLFLTITTWCFVSTIGL. At 265-301 the chain is on the cytoplasmic side; that stretch reads TELYCILRRGPAPKNADKAAAPGRSKGLSGVCGRCCS. The interval 265 to 301 is interaction with UL20; the sequence is TELYCILRRGPAPKNADKAAAPGRSKGLSGVCGRCCS. A helical transmembrane segment spans residues 302 to 322; sequence IILSGIAMRLCYIAVVAGVVL. Residues 323-338 are Extracellular-facing; that stretch reads VALHYEQEIQRRLFDV.

The protein belongs to the alphaherpesvirinae glycoprotein K family. As to quaternary structure, interacts (via UL20 interaction region) with protein UL20 (via N-terminus); this interaction probably plays a role in the coordinate transport of protein UL20 and gK to the trans-Golgi network (TGN), and is required for the cell surface expression of gK. In terms of processing, N-glycosylated.

The protein resides in the host cell membrane. The protein localises to the host endosome membrane. Its subcellular location is the host Golgi apparatus membrane. In terms of biological role, glycoprotein that probably modulates membrane fusion events during secondary envelopment of cytoplasmic capsids that bud into specific trans-Golgi network (TGN)-derived membranes. Also plays a role, together with gB, in virus-induced cell-to-cell fusion (syncytia formation). Seems to block fusion of virions with infected-cell membranes. The protein is Envelope glycoprotein K (gK) of Homo sapiens (Human).